The following is a 203-amino-acid chain: Glycerol-3-phosphate acyltransferase (203 aa).

5 helical membrane passes run 13-33 (TLAC…LILT), 66-86 (TLLL…LWGV), 88-108 (AGMA…WLSF), 118-138 (IGVL…AWLA), and 156-176 (IIPV…FAVM).

This sequence belongs to the PlsY family. Probably interacts with PlsX.

It is found in the cell inner membrane. The enzyme catalyses an acyl phosphate + sn-glycerol 3-phosphate = a 1-acyl-sn-glycero-3-phosphate + phosphate. It participates in lipid metabolism; phospholipid metabolism. In terms of biological role, catalyzes the transfer of an acyl group from acyl-phosphate (acyl-PO(4)) to glycerol-3-phosphate (G3P) to form lysophosphatidic acid (LPA). This enzyme utilizes acyl-phosphate as fatty acyl donor, but not acyl-CoA or acyl-ACP. The protein is Glycerol-3-phosphate acyltransferase of Sinorhizobium medicae (strain WSM419) (Ensifer medicae).